The following is a 240-amino-acid chain: Methylthioribulose-1-phosphate dehydratase (240 aa).

Cys103 is a substrate binding site. Zn(2+)-binding residues include His121 and His123. The active-site Proton donor/acceptor is Glu144. His200 lines the Zn(2+) pocket.

This sequence belongs to the aldolase class II family. MtnB subfamily. The cofactor is Zn(2+).

Its subcellular location is the cytoplasm. The enzyme catalyses 5-(methylsulfanyl)-D-ribulose 1-phosphate = 5-methylsulfanyl-2,3-dioxopentyl phosphate + H2O. It functions in the pathway amino-acid biosynthesis; L-methionine biosynthesis via salvage pathway; L-methionine from S-methyl-5-thio-alpha-D-ribose 1-phosphate: step 2/6. Functionally, catalyzes the dehydration of methylthioribulose-1-phosphate (MTRu-1-P) into 2,3-diketo-5-methylthiopentyl-1-phosphate (DK-MTP-1-P). This Komagataella phaffii (strain GS115 / ATCC 20864) (Yeast) protein is Methylthioribulose-1-phosphate dehydratase.